A 593-amino-acid chain; its full sequence is Meiotic recombination protein REC8 homolog (593 aa).

Position 149 is a phosphoserine (serine 149). The residue at position 164 (threonine 164) is a Phosphothreonine. Phosphoserine is present on serine 192. Disordered regions lie at residues 247-282, 317-344, and 422-444; these read QRRA…AQVE, ELRL…RRGR, and PQLE…RRKT. The span at 255–265 shows a compositional bias: basic and acidic residues; the sequence is DESKEEPRALE. Over residues 432–444 the composition is skewed to basic and acidic residues; sequence EERVADKEERRKT.

The protein belongs to the rad21 family. Interacts (phosphorylated and unphosphorylated form) with SMC3. Interacts with SYCP3. Interacts (phosphorylated and unphosphorylated form) with SMC1B. Does not interact with SMC1A. Interacts with RAD51. Forms a complex with EWSR1, PRDM9, SYCP3 and SYCP1; complex formation is dependent of phosphorylated form of REC8 and requires PRDM9 bound to hotspot DNA; EWSR1 joins PRDM9 with the chromosomal axis through REC8. Post-translationally, phosphorylated.

It localises to the nucleus. The protein localises to the chromosome. It is found in the centromere. Its function is as follows. Required during meiosis for separation of sister chromatids and homologous chromosomes. Proteolytic cleavage of REC8 on chromosome arms by separin during anaphase I allows for homologous chromosome separation in meiosis I and cleavage of REC8 on centromeres during anaphase II allows for sister chromatid separation in meiosis II. In Rattus norvegicus (Rat), this protein is Meiotic recombination protein REC8 homolog.